The chain runs to 186 residues: EF-hand protein 5 (186 aa).

The disordered stretch occupies residues 1–23 (MSRSKEVSPNLSQQKRGDVRSAG). 4 EF-hand domains span residues 41 to 76 (SAELQEGYRILTGGQKANIISDKDLFKAIHSCGLHT), 77 to 112 (SEEEVNDLLRVVHQDERTLGLEFPEFMMLMTKGIDE), 113 to 148 (ASIAEMRRPFSVLDKAKTGVITKKQFTELFVSSGEH), and 149 to 186 (SSAEELEELMLLAETSEELEVVDYNKLINELAILLNKM). Ca(2+) contacts are provided by E98, D126, and T130.

The protein is EF-hand protein 5 of Leishmania tarentolae (Sauroleishmania tarentolae).